We begin with the raw amino-acid sequence, 187 residues long: Mitochondrial intermembrane space import and assembly protein 40 (187 aa).

A mitochondrion-targeting transit peptide spans 1–24; the sequence is MFRPASRALLRAPAVARGPASRRL. Over 25–43 the chain is Mitochondrial matrix; the sequence is ISTAPAESKPRSWKNTAVR. A helical; Signal-anchor for type II membrane protein transmembrane segment spans residues 44 to 61; that stretch reads LGLAAGAIYYYNTSNVFA. At 62 to 187 the chain is on the mitochondrial intermembrane side; it reads ENPSFSLNNQ…MDCIEKFKCV (126 aa). Residues 73–115 are disordered; sequence KKNSAEEPLPTLDSIKPRIREERESAAPKPNAEQAPAQELPFG. Residues 87-98 show a composition bias toward basic and acidic residues; the sequence is IKPRIREERESA. Cystine bridges form between Cys-146/Cys-148 and Cys-167/Cys-180. Positions 154-187 constitute a CHCH domain; that stretch reads HGPCGEEFKAAFSCFVYSEEEPKGMDCIEKFKCV. Residues 157 to 167 carry the Cx9C motif motif; sequence CGEEFKAAFSC.

Monomer. Cu(2+) is required as a cofactor. Zn(2+) serves as cofactor.

It is found in the mitochondrion inner membrane. Its function is as follows. Required for the import and folding of small cysteine-containing proteins (small Tim) in the mitochondrial intermembrane space (IMS). Forms a redox cycle with ERV1 that involves a disulfide relay system. Precursor proteins to be imported into the IMS are translocated in their reduced form into the mitochondria. The oxidized form of MIA40 forms a transient intermolecular disulfide bridge with the reduced precursor protein, resulting in oxidation of the precursor protein that now contains an intramolecular disulfide bond and is able to undergo folding in the IMS. The protein is Mitochondrial intermembrane space import and assembly protein 40 (mia40) of Aspergillus oryzae (strain ATCC 42149 / RIB 40) (Yellow koji mold).